The following is a 957-amino-acid chain: Outer kinetochore KNL1 complex subunit knl-1 (957 aa).

Repeat unit 1 spans residues 87-90 (MDIT). Residues 87-393 (MDITGLNSTP…NFDDVAMDIT (307 aa)) form an 8 X 4 AA repeats of M-[D/E]-[I/L/M]-[S/T] region. The tract at residues 89–111 (ITGLNSTPVTPKTQTPFNGSMDM) is disordered. Residues 91 to 106 (GLNSTPVTPKTQTPFN) show a composition bias toward polar residues. Tandem repeats lie at residues 109–112 (MDMS), 206–209 (MDIT), 251–254 (MDIT), 282–285 (MDLT), 326–329 (MEMT), 367–370 (MEMT), and 390–393 (MDIT). The disordered stretch occupies residues 476–504 (SLQQSSMRMSTTITEDVTASKNPESSTIS). Residues 830-950 (KFAKESNVEI…RKKKEEMVER (121 aa)) adopt a coiled-coil conformation.

Component of the KNL1 complex composed of knl-1 and kbp-5. Part of the ten-subunit outer kinetochore KMN network that includes the KNL1, MIS12 and NDC80 complexes. Interacts with the protein phosphatase 1 (PP1) catalytic subunit gsp-1; the interaction is direct. Interacts with the protein phosphatase 1 (PP1) catalytic subunit gsp-2; the interaction is direct. Interacts with the MIS12 complex subunits kbp-1, kbp-2 and mis-12. Interacts with the NDC80 complex components ndc-80 and him-10. Interacts with knl-3. Interacts with kbp-3. Interacts with kbp-4. Interacts with kbp-5.

It localises to the cytoplasm. The protein resides in the cell cortex. Its subcellular location is the chromosome. The protein localises to the centromere. It is found in the kinetochore. In terms of biological role, acts as a component of the outer kinetochore KNL1 complex that serves as a docking point for spindle assembly checkpoint components and mediates microtubule-kinetochore interactions. Kinetochores, consisting of a centromere-associated inner segment and a microtubule-contacting outer segment, play a crucial role in chromosome segregation by mediating the physical connection between centromeric DNA and spindle microtubules. The outer kinetochore is made up of the ten-subunit KMN network, comprising the MIS12, NDC80 and KNL1 complexes, and auxiliary microtubule-associated components; together they connect the outer kinetochore with the inner kinetochore, bind microtubules, and mediate interactions with mitotic checkpoint proteins that delay anaphase until chromosomes are bioriented on the spindle. Binds the protein phosphatase 1 catalytic subunits gsp-1 and gsp-2, which has a role in delaying formation of load-bearing kinetochore-microtubule attachments. Required for the recruitment of spindle-assembly checkpoint components bub-1 and mdf-1/2 to unattached kinetochores. Binds microtubules which plays a role in silencing of the spindle assembly checkpoint, but not the formation of load-bearing microtubule-kinetochore attachments. Has a role in the correct localization of the spindly-like protein spdl-1 and the RZZ complex that is composed of rod-1, czw-1 and zwl-1 to kinetochores. This Caenorhabditis briggsae protein is Outer kinetochore KNL1 complex subunit knl-1.